The sequence spans 463 residues: MSNVVTRFAPSPTGHLHIGGARTAIFNWLLARHFGGRFVLRIEDTDTERSKQEYTDSILASMKWLGLDWDGDLIYQSERFDIYNSYIDRLLESGHAYWCECPPDEVEKMREEARAKGLKPRYNGRCRSRDLGPGDGRVVRLKAPAEGRIVFDDLVKGTVAFDVAELDDMVLRRSDGAPTYNLAVVVDDATMGVTHVLRGDDHLSNTPKQILLYQALGFDLPRFGHVPMILGPDRKKLSKRHGAKAVIEYEQYGLLPQALVNYLVRLGWSHGDQEIFALEELVEKFGTENLNSSAAGFDPDKLEWLNGHYLRETSPEELARLVLPFVAAEGFDVDASRLAQLVPLFRERANNLVELARVMRFMLVPAAEVEYDAAAVAKALTEEGRRHVAGVREALAALGTFDREGCEKAIHDYVEGNGLKFKQVAPAVRVAVVGAMGGPGLPDMMALLGRDDVLARLDRAVAL.

Residues 10-20 (PSPTGHLHIGG) carry the 'HIGH' region motif. Positions 236 to 240 (KLSKR) match the 'KMSKS' region motif. K239 contributes to the ATP binding site.

Belongs to the class-I aminoacyl-tRNA synthetase family. Glutamate--tRNA ligase type 1 subfamily. As to quaternary structure, monomer.

The protein resides in the cytoplasm. The catalysed reaction is tRNA(Glu) + L-glutamate + ATP = L-glutamyl-tRNA(Glu) + AMP + diphosphate. Functionally, catalyzes the attachment of glutamate to tRNA(Glu) in a two-step reaction: glutamate is first activated by ATP to form Glu-AMP and then transferred to the acceptor end of tRNA(Glu). This Nitratidesulfovibrio vulgaris (strain ATCC 29579 / DSM 644 / CCUG 34227 / NCIMB 8303 / VKM B-1760 / Hildenborough) (Desulfovibrio vulgaris) protein is Glutamate--tRNA ligase.